We begin with the raw amino-acid sequence, 173 residues long: Lipoprotein signal peptidase (173 aa).

3 helical membrane passes run 12 to 32 (WLWL…WTIQ), 67 to 87 (WQRY…VYLL), and 102 to 122 (ALIL…GYVI). Active-site residues include aspartate 123 and aspartate 141. Residues 137–157 (FNIADSAIFTGAVIMIFESFF) form a helical membrane-spanning segment.

Belongs to the peptidase A8 family.

Its subcellular location is the cell inner membrane. It carries out the reaction Release of signal peptides from bacterial membrane prolipoproteins. Hydrolyzes -Xaa-Yaa-Zaa-|-(S,diacylglyceryl)Cys-, in which Xaa is hydrophobic (preferably Leu), and Yaa (Ala or Ser) and Zaa (Gly or Ala) have small, neutral side chains.. It functions in the pathway protein modification; lipoprotein biosynthesis (signal peptide cleavage). In terms of biological role, this protein specifically catalyzes the removal of signal peptides from prolipoproteins. The polypeptide is Lipoprotein signal peptidase (Psychromonas ingrahamii (strain DSM 17664 / CCUG 51855 / 37)).